A 136-amino-acid polypeptide reads, in one-letter code: Translation initiation factor 5A (136 aa).

The residue at position 37 (lysine 37) is a Hypusine.

The protein belongs to the eIF-5A family.

The protein localises to the cytoplasm. Functionally, functions by promoting the formation of the first peptide bond. This Thermococcus kodakarensis (strain ATCC BAA-918 / JCM 12380 / KOD1) (Pyrococcus kodakaraensis (strain KOD1)) protein is Translation initiation factor 5A.